The sequence spans 61 residues: UPF0434 protein PSPTO_3844 (61 aa).

It belongs to the UPF0434 family.

The chain is UPF0434 protein PSPTO_3844 from Pseudomonas syringae pv. tomato (strain ATCC BAA-871 / DC3000).